The primary structure comprises 362 residues: Protein Tob1 (362 aa).

Positions 22–39 (RRRVNIFGEELERLLKKK) match the Bipartite nuclear localization signal motif. The important for nuclear localization stretch occupies residues 82-92 (VRGNLPQDLSV). Residues 144–160 (DPASSVSSSPSPPFGHS) are compositionally biased toward low complexity. A disordered region spans residues 144-171 (DPASSVSSSPSPPFGHSAAVSPTFMPRS). Positions 161 to 220 (AAVSPTFMPRSTQPLTFTTATFAATKFGSTKMKNSGRSSKVARTSPINLGLTVNVNDLLK) are required for interaction with CPEB3. Residue Thr-204 is modified to Phosphothreonine. A Nuclear export signal motif is present at residues 228 to 236 (VHSLYGLGL). The disordered stretch occupies residues 234 to 284 (LGLGSQQQPQPQPQQQQQQQPSSSQPPPPLPQQQQQQPQQQQQQQQQTSAL). Low complexity-rich tracts occupy residues 238–256 (SQQQ…QPSS) and 265–280 (QQQQ…QQQQ).

The protein belongs to the BTG family. Interacts with ERBB2. Interacts with CNOT7. Interacts with CPEB3 (via C-terminal RNA-binding region); recruits CNOT7 to CPEB3 to form a ternary complex required for mRNA deadenylation and decay. Interacts with CNOT8. Interacts with CPEB4. Post-translationally, phosphorylated on Ser and Thr residues. Ubiquitous.

It is found in the cytoplasm. The protein resides in the nucleus. Functionally, anti-proliferative protein; the function is mediated by association with deadenylase subunits of the CCR4-NOT complex. Mediates CPEB3-accelerated mRNA deadenylation by binding to CPEB3 and recruiting CNOT7 which leads to target mRNA deadenylation and decay. This Mus musculus (Mouse) protein is Protein Tob1 (Tob1).